A 269-amino-acid chain; its full sequence is Diaminopimelate epimerase (269 aa).

Residues Asn15, Gln49, and Asn66 each contribute to the substrate site. The active-site Proton donor is Cys75. Substrate-binding positions include 76-77 (GN), Asn155, Asn187, and 204-205 (ER). Catalysis depends on Cys213, which acts as the Proton acceptor. Residue 214–215 (GS) participates in substrate binding.

This sequence belongs to the diaminopimelate epimerase family. Homodimer.

The protein localises to the cytoplasm. It catalyses the reaction (2S,6S)-2,6-diaminopimelate = meso-2,6-diaminopimelate. It participates in amino-acid biosynthesis; L-lysine biosynthesis via DAP pathway; DL-2,6-diaminopimelate from LL-2,6-diaminopimelate: step 1/1. Its function is as follows. Catalyzes the stereoinversion of LL-2,6-diaminopimelate (L,L-DAP) to meso-diaminopimelate (meso-DAP), a precursor of L-lysine and an essential component of the bacterial peptidoglycan. This Rickettsia bellii (strain OSU 85-389) protein is Diaminopimelate epimerase.